Consider the following 459-residue polypeptide: uncharacterized protein (459 aa).

The protein belongs to the Rab GDI family.

Its subcellular location is the cytoplasm. It is found in the nucleus. This is an uncharacterized protein from Schizosaccharomyces pombe (strain 972 / ATCC 24843) (Fission yeast).